A 415-amino-acid chain; its full sequence is Thyroxine-binding globulin (415 aa).

The signal sequence occupies residues 1–20 (MSPFLYLVLLVLGLHATIHC). N-linked (GlcNAc...) asparagine glycans are attached at residues N36, N99, N165, and N253. Thyroxine contacts are provided by N293 and R398.

Belongs to the serpin family.

It is found in the secreted. Functionally, major thyroid hormone transport protein in serum. This is Thyroxine-binding globulin (SERPINA7) from Pan troglodytes (Chimpanzee).